The following is a 48-amino-acid chain: Piguamerin (48 aa).

Disulfide bonds link Cys-3/Cys-14, Cys-8/Cys-19, Cys-21/Cys-41, Cys-26/Cys-45, and Cys-30/Cys-47. The Antistasin-like domain occupies Cys-19–Cys-47.

This sequence belongs to the protease inhibitor I15 (antistasin) family.

The protein resides in the secreted. In terms of biological role, inhibits plasma and tissue kallikrein, and trypsin. May be involved in leech hematophagia. The polypeptide is Piguamerin (Hirudo nipponia (Korean blood-sucking leech)).